Here is a 412-residue protein sequence, read N- to C-terminus: uncharacterized protein (412 aa).

Residue H49 participates in Zn(2+) binding. E52 serves as the catalytic Proton acceptor. Zn(2+) contacts are provided by H53 and E129.

Belongs to the peptidase M16 family. Requires Zn(2+) as cofactor.

This is an uncharacterized protein from Rickettsia bellii (strain RML369-C).